A 416-amino-acid chain; its full sequence is Serine hydroxymethyltransferase 1 (416 aa).

Residues leucine 121 and 125–127 (GHL) contribute to the (6S)-5,6,7,8-tetrahydrofolate site. Lysine 229 bears the N6-(pyridoxal phosphate)lysine mark. Residues glutamate 245 and 354 to 356 (SPF) each bind (6S)-5,6,7,8-tetrahydrofolate.

This sequence belongs to the SHMT family. In terms of assembly, homodimer. Pyridoxal 5'-phosphate serves as cofactor.

It localises to the cytoplasm. The catalysed reaction is (6R)-5,10-methylene-5,6,7,8-tetrahydrofolate + glycine + H2O = (6S)-5,6,7,8-tetrahydrofolate + L-serine. Its pathway is one-carbon metabolism; tetrahydrofolate interconversion. It participates in amino-acid biosynthesis; glycine biosynthesis; glycine from L-serine: step 1/1. In terms of biological role, catalyzes the reversible interconversion of serine and glycine with tetrahydrofolate (THF) serving as the one-carbon carrier. This reaction serves as the major source of one-carbon groups required for the biosynthesis of purines, thymidylate, methionine, and other important biomolecules. Also exhibits THF-independent aldolase activity toward beta-hydroxyamino acids, producing glycine and aldehydes, via a retro-aldol mechanism. The chain is Serine hydroxymethyltransferase 1 from Vibrio cholerae serotype O1 (strain ATCC 39315 / El Tor Inaba N16961).